Here is a 311-residue protein sequence, read N- to C-terminus: 4-diphosphocytidyl-2-C-methyl-D-erythritol kinase (311 aa).

Lysine 16 is a catalytic residue. Position 100–110 (100–110) interacts with ATP; that stretch reads PIGAGLAGGSS. Residue aspartate 142 is part of the active site.

This sequence belongs to the GHMP kinase family. IspE subfamily.

It carries out the reaction 4-CDP-2-C-methyl-D-erythritol + ATP = 4-CDP-2-C-methyl-D-erythritol 2-phosphate + ADP + H(+). It participates in isoprenoid biosynthesis; isopentenyl diphosphate biosynthesis via DXP pathway; isopentenyl diphosphate from 1-deoxy-D-xylulose 5-phosphate: step 3/6. In terms of biological role, catalyzes the phosphorylation of the position 2 hydroxy group of 4-diphosphocytidyl-2C-methyl-D-erythritol. This is 4-diphosphocytidyl-2-C-methyl-D-erythritol kinase from Prochlorococcus marinus (strain MIT 9215).